A 437-amino-acid polypeptide reads, in one-letter code: UDP-N-acetylmuramoylalanine--D-glutamate ligase (437 aa).

An ATP-binding site is contributed by 112–118 (GSNGKST).

It belongs to the MurCDEF family.

The protein localises to the cytoplasm. The catalysed reaction is UDP-N-acetyl-alpha-D-muramoyl-L-alanine + D-glutamate + ATP = UDP-N-acetyl-alpha-D-muramoyl-L-alanyl-D-glutamate + ADP + phosphate + H(+). The protein operates within cell wall biogenesis; peptidoglycan biosynthesis. Functionally, cell wall formation. Catalyzes the addition of glutamate to the nucleotide precursor UDP-N-acetylmuramoyl-L-alanine (UMA). This is UDP-N-acetylmuramoylalanine--D-glutamate ligase (murD) from Haemophilus influenzae (strain ATCC 51907 / DSM 11121 / KW20 / Rd).